The primary structure comprises 637 residues: Multicopper oxidase LPR1 homolog 5 (637 aa).

Positions 1–21 are cleaved as a signal peptide; the sequence is MSPRIQQLAAVLLAAVVVVAA. Asparagine 100 carries an N-linked (GlcNAc...) asparagine glycan. Residues histidine 209 and histidine 211 each contribute to the Cu cation site. Asparagine 234 carries N-linked (GlcNAc...) asparagine glycosylation. Cu cation contacts are provided by histidine 257 and histidine 259. N-linked (GlcNAc...) asparagine glycosylation is found at asparagine 308, asparagine 349, asparagine 357, asparagine 425, asparagine 482, and asparagine 516. The Plastocyanin-like domain maps to 334 to 406; that stretch reads PYLSVQRRRY…IVDFSRLPAA (73 aa). Cu cation contacts are provided by histidine 522, histidine 525, and histidine 527. Residue asparagine 553 is glycosylated (N-linked (GlcNAc...) asparagine). Residues histidine 618, cysteine 619, histidine 620, histidine 624, and methionine 629 each contribute to the Cu cation site.

This sequence belongs to the multicopper oxidase family. Cu cation serves as cofactor. Highly expressed in roots and basal stems.

The protein resides in the endoplasmic reticulum membrane. Multicopper oxidase that may play a role in the maintenance of inorganic phosphate homeostasis. This Oryza sativa subsp. japonica (Rice) protein is Multicopper oxidase LPR1 homolog 5.